A 374-amino-acid polypeptide reads, in one-letter code: Tomoregulin-2 (374 aa).

The N-terminal stretch at 1–40 is a signal peptide; it reads MVLWESPRQCSSWTLCEGFCWLLLLPVMLLIVARPVKLAA. At 41 to 320 the chain is on the extracellular side; it reads FPTSLSDCQT…VPGPVRFQYV (280 aa). 2 consecutive Kazal-like domains span residues 90–137 and 181–229; these read VCQF…SCAT and VCNI…RCQD. 6 cysteine pairs are disulfide-bonded: Cys-91-Cys-121, Cys-95-Cys-114, Cys-103-Cys-135, Cys-182-Cys-213, Cys-186-Cys-206, and Cys-195-Cys-227. An N-linked (GlcNAc...) (complex) asparagine; atypical glycan is attached at Asn-204. N-linked (GlcNAc...) asparagine glycosylation is present at Asn-230. Residues 261 to 301 enclose the EGF-like domain; sequence HHIPCPEHYNGFCMHGKCEHSINMQEPSCRCDAGYTGQHCE. 3 disulfides stabilise this stretch: Cys-265-Cys-278, Cys-273-Cys-289, and Cys-291-Cys-300. A required for shedding region spans residues 303–320; that stretch reads KDYSVLYVVPGPVRFQYV. A helical membrane pass occupies residues 321-341; that stretch reads LIAAVIGTIQIAVICVVVLCI. Over 342 to 374 the chain is Cytoplasmic; it reads TRKCPRSNRIHRQKQNTGHYSSDNTTRASTRLI. The disordered stretch occupies residues 353 to 374; that stretch reads RQKQNTGHYSSDNTTRASTRLI. Positions 356-374 are enriched in polar residues; the sequence is QNTGHYSSDNTTRASTRLI.

This sequence belongs to the tomoregulin family. O-glycosylated; contains chondroitin sulfate glycosaminoglycans. Post-translationally, a soluble form (TMEFF2-ECD) is produced by proteolytic shedding. This shedding can be induced by phorbol ester or pro-inflammatory cytokines such as TNFalpha, and is mediated by ADAM17. In terms of tissue distribution, highly expressed in adult and fetal brain, spinal cord and prostate. Expressed in all brain regions except the pituitary gland, with highest levels in amygdala and corpus callosum. Expressed in the pericryptal myofibroblasts and other stromal cells of normal colonic mucosa. Expressed in prostate carcinoma. Down-regulated in colorectal cancer. Present in Alzheimer disease plaques (at protein level). Isoform 3 is expressed weakly in testis and at high levels in normal and cancerous prostate.

The protein resides in the membrane. It is found in the secreted. Its function is as follows. May be a survival factor for hippocampal and mesencephalic neurons. The shedded form up-regulates cancer cell proliferation, probably by promoting ERK1/2 phosphorylation. This is Tomoregulin-2 (TMEFF2) from Homo sapiens (Human).